Here is a 464-residue protein sequence, read N- to C-terminus: Asparagine--tRNA ligase (464 aa).

Belongs to the class-II aminoacyl-tRNA synthetase family. Homodimer.

It localises to the cytoplasm. It carries out the reaction tRNA(Asn) + L-asparagine + ATP = L-asparaginyl-tRNA(Asn) + AMP + diphosphate + H(+). This chain is Asparagine--tRNA ligase, found in Xanthomonas axonopodis pv. citri (strain 306).